We begin with the raw amino-acid sequence, 219 residues long: Ribose-5-phosphate isomerase A (219 aa).

Residues 28–31 (TGST), 81–84 (DGAD), and 94–97 (KGGG) contribute to the substrate site. Catalysis depends on glutamate 103, which acts as the Proton acceptor. Lysine 121 contacts substrate.

It belongs to the ribose 5-phosphate isomerase family. In terms of assembly, homodimer.

It carries out the reaction aldehydo-D-ribose 5-phosphate = D-ribulose 5-phosphate. It functions in the pathway carbohydrate degradation; pentose phosphate pathway; D-ribose 5-phosphate from D-ribulose 5-phosphate (non-oxidative stage): step 1/1. Functionally, catalyzes the reversible conversion of ribose-5-phosphate to ribulose 5-phosphate. The polypeptide is Ribose-5-phosphate isomerase A (Edwardsiella ictaluri (strain 93-146)).